Here is a 764-residue protein sequence, read N- to C-terminus: DNA replication regulator DPB11 (764 aa).

3 BRCT domains span residues 1–99 (MKPF…MTGS), 129–220 (TNIT…PYYL), and 322–418 (NSTL…DLWS). 2 disordered regions span residues 651–675 (ETDSGRKKRSVSSSIMDVSSERQMP) and 710–764 (TEQP…ELDS). Residues 739–751 (QDKKRTASLEKPM) are compositionally biased toward basic and acidic residues.

Interacts with SLD2.

The protein resides in the nucleus. Its function is as follows. Has a role in the initiation of DNA replication. Required at S-phase checkpoint. Required for the association of PSF1 with origins. Also required for the proper activation of RAD53 in response to DNA damage and replication blocks. Multicopy suppressor of DPB2 mutation. Overexpression restores the growth defect conferred by POL2 mutation. This is DNA replication regulator DPB11 (DPB11) from Saccharomyces cerevisiae (strain ATCC 204508 / S288c) (Baker's yeast).